The primary structure comprises 398 residues: Ethanolaminephosphotransferase 1 (398 aa).

At A2 the chain carries N-acetylalanine. The next 10 helical transmembrane spans lie at 47-69 (WLAP…LLLT), 84-103 (HVPD…AYTL), 123-145 (LFDH…SIFG), 150-172 (GVSV…LSHW), 179-201 (VLFL…IVTA), 221-243 (LFTA…LNFF), 256-278 (VYEA…VWIL), 291-310 (IFYF…LIVC), 319-341 (TLNW…AATS), and 345-367 (SALL…VQVV). Position 388 (U388) is a non-standard amino acid, selenocysteine.

Belongs to the CDP-alcohol phosphatidyltransferase class-I family. Requires Mg(2+) as cofactor. It depends on Mn(2+) as a cofactor.

The protein resides in the endoplasmic reticulum membrane. It catalyses the reaction CDP-ethanolamine + a 1,2-diacyl-sn-glycerol = a 1,2-diacyl-sn-glycero-3-phosphoethanolamine + CMP + H(+). The enzyme catalyses 1-O-alkyl-2-acyl-sn-glycerol + CDP-ethanolamine = a 1-O-alkyl-2-acyl-sn-glycero-3-phosphoethanolamine + CMP + H(+). Its pathway is phospholipid metabolism; phosphatidylethanolamine biosynthesis; phosphatidylethanolamine from ethanolamine: step 3/3. Ethanolaminephosphotransferase that catalyzes the transfer of phosphoethanolamine (PE) from CDP-ethanolamine to lipid acceptors, the final step in the synthesis of PE via the 'Kennedy' pathway. PE is the second most abundant phospholipid of membranes in mammals and is involved in various membrane-related cellular processes. The enzyme is critical for the synthesis of several PE species and also catalyzes the synthesis of plasmanyl-PE, a lipid required for proper myelination and neurodevelopment, from 1-alkyl-2-acylglycerol. This chain is Ethanolaminephosphotransferase 1, found in Mus musculus (Mouse).